The chain runs to 209 residues: U1 small nuclear ribonucleoprotein C (209 aa).

The segment at 4–36 (HYCDYCDVFLTHDSASVRKAHNSGRNHLANVRD) adopts a Matrin-type zinc-finger fold. Low complexity predominate over residues 72–87 (PQHLQAPPQGGFAPPM). Residues 72–209 (PQHLQAPPQG…RARMMGPGGR (138 aa)) are disordered. Composition is skewed to pro residues over residues 93–150 (GGFP…PFPP) and 159–191 (PGAP…PTNP).

It belongs to the U1 small nuclear ribonucleoprotein C family. In terms of assembly, U1 snRNP is composed of the 7 core Sm proteins B/B', D1, D2, D3, E, F and G that assemble in a heptameric protein ring on the Sm site of the small nuclear RNA to form the core snRNP, and at least 3 U1 snRNP-specific proteins U1-70K, U1-A and U1-C. U1-C interacts with U1 snRNA and the 5' splice-site region of the pre-mRNA.

Its subcellular location is the nucleus. Functionally, component of the spliceosomal U1 snRNP, which is essential for recognition of the pre-mRNA 5' splice-site and the subsequent assembly of the spliceosome. U1-C is directly involved in initial 5' splice-site recognition for both constitutive and regulated alternative splicing. The interaction with the 5' splice-site seems to precede base-pairing between the pre-mRNA and the U1 snRNA. Stimulates commitment or early (E) complex formation by stabilizing the base pairing of the 5' end of the U1 snRNA and the 5' splice-site region. The protein is U1 small nuclear ribonucleoprotein C of Coprinopsis cinerea (strain Okayama-7 / 130 / ATCC MYA-4618 / FGSC 9003) (Inky cap fungus).